The sequence spans 401 residues: Ribosomal RNA large subunit methyltransferase G (401 aa).

It belongs to the methyltransferase superfamily. RlmG family.

Its subcellular location is the cytoplasm. It catalyses the reaction guanosine(1835) in 23S rRNA + S-adenosyl-L-methionine = N(2)-methylguanosine(1835) in 23S rRNA + S-adenosyl-L-homocysteine + H(+). Its function is as follows. Specifically methylates the guanine in position 1835 (m2G1835) of 23S rRNA. This is Ribosomal RNA large subunit methyltransferase G from Shewanella loihica (strain ATCC BAA-1088 / PV-4).